Consider the following 299-residue polypeptide: Oxygen-dependent coproporphyrinogen-III oxidase (299 aa).

S92 is a binding site for substrate. 2 residues coordinate Mn(2+): H96 and H106. The active-site Proton donor is the H106. 108 to 110 (NVR) is a substrate binding site. Positions 145 and 175 each coordinate Mn(2+). The tract at residues 240–275 (YVEFNLVWDRGTLFGLQTGGRTESILMSMPPLVRWE) is important for dimerization. 258–260 (GGR) provides a ligand contact to substrate.

This sequence belongs to the aerobic coproporphyrinogen-III oxidase family. In terms of assembly, homodimer. The cofactor is Mn(2+).

It is found in the cytoplasm. The enzyme catalyses coproporphyrinogen III + O2 + 2 H(+) = protoporphyrinogen IX + 2 CO2 + 2 H2O. Its pathway is porphyrin-containing compound metabolism; protoporphyrin-IX biosynthesis; protoporphyrinogen-IX from coproporphyrinogen-III (O2 route): step 1/1. In terms of biological role, involved in the heme biosynthesis. Catalyzes the aerobic oxidative decarboxylation of propionate groups of rings A and B of coproporphyrinogen-III to yield the vinyl groups in protoporphyrinogen-IX. The polypeptide is Oxygen-dependent coproporphyrinogen-III oxidase (Escherichia coli (strain SE11)).